The sequence spans 292 residues: Glycine--tRNA ligase alpha subunit (292 aa).

This sequence belongs to the class-II aminoacyl-tRNA synthetase family. In terms of assembly, tetramer of two alpha and two beta subunits.

Its subcellular location is the cytoplasm. It catalyses the reaction tRNA(Gly) + glycine + ATP = glycyl-tRNA(Gly) + AMP + diphosphate. In Syntrophus aciditrophicus (strain SB), this protein is Glycine--tRNA ligase alpha subunit.